Reading from the N-terminus, the 294-residue chain is Dolichol-phosphate mannosyltransferase (294 aa).

The disordered stretch occupies residues 1–27; the sequence is MSIALDMDASAKMRKQPGSSGWSTSST. The Cytoplasmic segment spans residues 1 to 263; sequence MSIALDMDAS…QQLVELYRFR (263 aa). Positions 17–27 are enriched in low complexity; the sequence is PGSSGWSTSST. GDP-alpha-D-mannose contacts are provided by P35, E39, V70, D72, D123, A124, D125, Q127, R151, K211, R237, and K243. D125 and Q127 together coordinate Mg(2+). Residues D125 and Q127 each contribute to the Mn(2+) site. Residues 264-284 form a helical membrane-spanning segment; that stretch reads FGTVPIVFVLIVLLVLALYIW. At 285–294 the chain is on the lumenal side; that stretch reads SHVLAPMLGA.

The protein belongs to the glycosyltransferase 2 family. Requires Mg(2+) as cofactor. Mn(2+) is required as a cofactor. It depends on Ca(2+) as a cofactor.

The protein resides in the endoplasmic reticulum membrane. It catalyses the reaction a di-trans,poly-cis-dolichyl phosphate + GDP-alpha-D-mannose = a di-trans,poly-cis-dolichyl beta-D-mannosyl phosphate + GDP. It participates in protein modification; protein glycosylation. Its function is as follows. Transfers mannose from GDP-mannose to dolichol monophosphate to form dolichol phosphate mannose (Dol-P-Man) which is the mannosyl donor in pathways leading to N-glycosylation, glycosyl phosphatidylinositol membrane anchoring, and O-mannosylation of proteins. The chain is Dolichol-phosphate mannosyltransferase (DPM1) from Mycosarcoma maydis (Corn smut fungus).